A 303-amino-acid chain; its full sequence is Lysosomal amino acid transporter 1 homolog (303 aa).

Over 1 to 38 the chain is Lumenal; sequence MAEGLRAPPPPGNGSECPDGARWVLRLLGECARDGRDV. Asparagine 13 carries an N-linked (GlcNAc...) asparagine glycan. Residues 36-102 form the PQ-loop 1 domain; sequence RDVGSALLGL…LANQLPLQVY (67 aa). Residues 39 to 59 traverse the membrane as a helical segment; that stretch reads GSALLGLLSIGCFAAAALPQF. The Cytoplasmic portion of the chain corresponds to 60 to 73; sequence YQACKTGIMDRALS. The helical transmembrane segment at 74–94 threads the bilayer; it reads IYFLLGWLGGDLLNLIGSFLA. The Lumenal segment spans residues 95-96; the sequence is NQ. Residues 97–117 traverse the membrane as a helical segment; that stretch reads LPLQVYTAVYYVLADLVMLSL. Topologically, residues 118-131 are cytoplasmic; it reads YGYYKAKNWGTGAT. A helical transmembrane segment spans residues 132–152; the sequence is ASINAACLFCLLGTATTLTVL. Over 153 to 182 the chain is Lumenal; the sequence is SHDTGPAPNPAAFGGRSLLSLGLEGPGPEP. The helical transmembrane segment at 183–203 threads the bilayer; sequence ISKTEIIGFAIGSISSVLYLC. Residues 186–251 form the PQ-loop 2 domain; that stretch reads TEIIGFAIGS…LKNPEPGQSE (66 aa). Over 204-220 the chain is Cytoplasmic; it reads SRLPQIYTNYRRKSTAG. Residues 221–241 traverse the membrane as a helical segment; the sequence is VSFLLFALVMLGNLLYGTSVL. Residues 242–260 are Lumenal-facing; that stretch reads LKNPEPGQSEGDYILHHLP. Residues 261-281 form a helical membrane-spanning segment; the sequence is WLIGSLGVLSLDVIISFQFLA. Topologically, residues 282–303 are cytoplasmic; it reads YRTGQPSAGEEREALLAEHGDS. Residues 296–297 carry the Di-leucine motif motif; sequence LL.

The protein belongs to the laat-1 family.

The protein localises to the lysosome membrane. Its function is as follows. Amino acid transporter that specifically mediates the pH-dependent export of the cationic amino acids arginine, histidine and lysine from lysosomes. In Gallus gallus (Chicken), this protein is Lysosomal amino acid transporter 1 homolog (SLC66A1).